A 448-amino-acid polypeptide reads, in one-letter code: Asparagine--tRNA ligase (448 aa).

It belongs to the class-II aminoacyl-tRNA synthetase family. In terms of assembly, homodimer.

It localises to the cytoplasm. The enzyme catalyses tRNA(Asn) + L-asparagine + ATP = L-asparaginyl-tRNA(Asn) + AMP + diphosphate + H(+). This Streptococcus pyogenes serotype M2 (strain MGAS10270) protein is Asparagine--tRNA ligase.